A 398-amino-acid chain; its full sequence is Acetate kinase (398 aa).

A Mg(2+)-binding site is contributed by Asn-7. Lys-14 is an ATP binding site. Residue Arg-91 participates in substrate binding. Asp-148 serves as the catalytic Proton donor/acceptor. ATP is bound by residues 208-212 (HLGNG), 283-285 (DFR), and 331-335 (GIGEH). Residue Glu-386 participates in Mg(2+) binding.

Belongs to the acetokinase family. As to quaternary structure, homodimer. Mg(2+) serves as cofactor. Requires Mn(2+) as cofactor.

The protein localises to the cytoplasm. The catalysed reaction is acetate + ATP = acetyl phosphate + ADP. Its pathway is metabolic intermediate biosynthesis; acetyl-CoA biosynthesis; acetyl-CoA from acetate: step 1/2. Functionally, catalyzes the formation of acetyl phosphate from acetate and ATP. Can also catalyze the reverse reaction. The sequence is that of Acetate kinase from Clostridium botulinum (strain Eklund 17B / Type B).